The primary structure comprises 154 residues: Small ribosomal subunit protein bS18 (154 aa).

The segment at 1-82 (MEKKTTKKAT…PFAKYNRGYP (82 aa)) is disordered. Positions 8-19 (KATASKTTTTKK) are enriched in low complexity. Basic and acidic residues predominate over residues 20–32 (AAAEKTEIKETKK). A compositionally biased stretch (low complexity) spans 33 to 49 (TTTTKTSTAKKATTASV). The segment covering 50 to 69 (EKTEVKETKKSSDNKKEFNP) has biased composition (basic and acidic residues).

Belongs to the bacterial ribosomal protein bS18 family. In terms of assembly, part of the 30S ribosomal subunit. Forms a tight heterodimer with protein bS6.

Its function is as follows. Binds as a heterodimer with protein bS6 to the central domain of the 16S rRNA, where it helps stabilize the platform of the 30S subunit. The sequence is that of Small ribosomal subunit protein bS18 from Malacoplasma penetrans (strain HF-2) (Mycoplasma penetrans).